The chain runs to 612 residues: Isocitrate dehydrogenase kinase/phosphatase (612 aa).

ATP-binding positions include 327-333 and K348; that span reads APGIKGL. Residue D383 is part of the active site. Residues 593 to 612 are disordered; that stretch reads AGAASNEQDAPDAGRSVRAA.

Belongs to the AceK family.

Its subcellular location is the cytoplasm. It carries out the reaction L-seryl-[isocitrate dehydrogenase] + ATP = O-phospho-L-seryl-[isocitrate dehydrogenase] + ADP + H(+). Its function is as follows. Bifunctional enzyme which can phosphorylate or dephosphorylate isocitrate dehydrogenase (IDH) on a specific serine residue. This is a regulatory mechanism which enables bacteria to bypass the Krebs cycle via the glyoxylate shunt in response to the source of carbon. When bacteria are grown on glucose, IDH is fully active and unphosphorylated, but when grown on acetate or ethanol, the activity of IDH declines drastically concomitant with its phosphorylation. The chain is Isocitrate dehydrogenase kinase/phosphatase from Paraburkholderia xenovorans (strain LB400).